The primary structure comprises 117 residues: Large ribosomal subunit protein uL18 (117 aa).

The protein belongs to the universal ribosomal protein uL18 family. In terms of assembly, part of the 50S ribosomal subunit; part of the 5S rRNA/L5/L18/L25 subcomplex. Contacts the 5S and 23S rRNAs.

Functionally, this is one of the proteins that bind and probably mediate the attachment of the 5S RNA into the large ribosomal subunit, where it forms part of the central protuberance. In Polynucleobacter asymbioticus (strain DSM 18221 / CIP 109841 / QLW-P1DMWA-1) (Polynucleobacter necessarius subsp. asymbioticus), this protein is Large ribosomal subunit protein uL18.